Here is a 493-residue protein sequence, read N- to C-terminus: Dipeptide permease D (493 aa).

13 helical membrane passes run 14–34, 49–69, 91–111, 138–158, 167–187, 212–232, 235–255, 267–287, 312–332, 344–364, 379–399, 413–433, and 458–478; these read VVAL…LLIL, ELFS…GYLA, LVLG…AIIV, GGFS…PIAC, WAMG…IFLC, NWGW…VLFW, WSVY…AKIY, LGLI…AQQG, MFQS…AWLV, IWGK…ILTL, LMVL…PVAM, VLTG…AGVI, and VFEQ…LIWL.

It belongs to the major facilitator superfamily. Proton-dependent oligopeptide transporter (POT/PTR) (TC 2.A.17) family. DtpD subfamily.

The protein localises to the cell inner membrane. Its function is as follows. Probable proton-dependent permease that transports dipeptides. In Salmonella choleraesuis (strain SC-B67), this protein is Dipeptide permease D.